Reading from the N-terminus, the 98-residue chain is Integration host factor subunit alpha (98 aa).

It belongs to the bacterial histone-like protein family. Heterodimer of an alpha and a beta chain.

Its function is as follows. This protein is one of the two subunits of integration host factor, a specific DNA-binding protein that functions in genetic recombination as well as in transcriptional and translational control. In Glaesserella parasuis serovar 5 (strain SH0165) (Haemophilus parasuis), this protein is Integration host factor subunit alpha.